Here is a 161-residue protein sequence, read N- to C-terminus: Nucleotide-binding protein Reut_A2760 (161 aa).

Belongs to the YajQ family.

Functionally, nucleotide-binding protein. This Cupriavidus pinatubonensis (strain JMP 134 / LMG 1197) (Cupriavidus necator (strain JMP 134)) protein is Nucleotide-binding protein Reut_A2760.